Here is a 303-residue protein sequence, read N- to C-terminus: tRNA pseudouridine synthase B (303 aa).

The active-site Nucleophile is D47.

The protein belongs to the pseudouridine synthase TruB family. Type 1 subfamily.

The catalysed reaction is uridine(55) in tRNA = pseudouridine(55) in tRNA. In terms of biological role, responsible for synthesis of pseudouridine from uracil-55 in the psi GC loop of transfer RNAs. In Ruegeria pomeroyi (strain ATCC 700808 / DSM 15171 / DSS-3) (Silicibacter pomeroyi), this protein is tRNA pseudouridine synthase B.